Consider the following 479-residue polypeptide: FAD-dependent monooxygenase sdcF (479 aa).

The FAD-binding PCMH-type domain maps to 40 to 213; that stretch reads AQLPPSCFVL…TLFDMEAFST (174 aa). His-79 carries the pros-8alpha-FAD histidine modification.

Belongs to the oxygen-dependent FAD-linked oxidoreductase family. Requires FAD as cofactor.

It functions in the pathway secondary metabolite biosynthesis. Functionally, FAD-dependent monooxygenase; part of the gene cluster that mediates the biosynthesis of the polyenes aspernidgulenes. The carbon backbone of aspernidgulenes is synthesized by the HR-PKS sdgA, which accepts acetyl-CoA as the starter unit and performs malonyl-CoA extensions as well as regioselective methylation and reduction. The resulting nonaketide offloads the HR-PKS by intramolecular lactonization to yield the 5,6-dihydro-alpha-pyrone-containing hexaenoic acids preaspernidgulene A1 and A2. The FAD-dependent monooxygenase sdgC then installs the first epoxide on the penultimate double bond. Subsequently, the FAD-dependent monooxygenase sdgF presumably generates a ketone intermediate through Meinwald rearrangement involving a hydride shift. Next, sdgC introduces another epoxide on the last olefin of the ketone intermediate after E/Z isomerization. The epoxide hydrolase sdgD then catalyzes stereospecific cyclization of the 5,6-dihydro-alpha-pyrone and opening of the epoxide ring to form an oxygenated trimethylcyclopentanone and an oxabicyclo[2.2.1]heptane unit. Finally, the bicyclic unit undergoes hydrolytic cleavage, either spontaneously or catalyzed by sdgD, to assemble the dimethyl-gamma-lactone moiety in aspernidgulene A1. The sequence is that of FAD-dependent monooxygenase sdcF from Emericella nidulans (strain FGSC A4 / ATCC 38163 / CBS 112.46 / NRRL 194 / M139) (Aspergillus nidulans).